A 416-amino-acid polypeptide reads, in one-letter code: Tyrosine--tRNA ligase (416 aa).

A 'HIGH' region motif is present at residues Pro-55–His-64. Residues Lys-249–Ser-253 carry the 'KMSKS' region motif. Position 252 (Lys-252) interacts with ATP. Residues Thr-352–Asn-416 enclose the S4 RNA-binding domain.

The protein belongs to the class-I aminoacyl-tRNA synthetase family. TyrS type 2 subfamily. As to quaternary structure, homodimer.

The protein localises to the cytoplasm. It carries out the reaction tRNA(Tyr) + L-tyrosine + ATP = L-tyrosyl-tRNA(Tyr) + AMP + diphosphate + H(+). In terms of biological role, catalyzes the attachment of tyrosine to tRNA(Tyr) in a two-step reaction: tyrosine is first activated by ATP to form Tyr-AMP and then transferred to the acceptor end of tRNA(Tyr). This chain is Tyrosine--tRNA ligase, found in Prochlorococcus marinus (strain SARG / CCMP1375 / SS120).